A 235-amino-acid chain; its full sequence is UPF0758 protein CD630_11440 (235 aa).

Residues 113-235 (KIMNPWDIQR…YFSFKENMII (123 aa)) enclose the MPN domain. 3 residues coordinate Zn(2+): H184, H186, and D197. The JAMM motif signature appears at 184 to 197 (HNHPSGSVEPSRED).

It belongs to the UPF0758 family.

The polypeptide is UPF0758 protein CD630_11440 (Clostridioides difficile (strain 630) (Peptoclostridium difficile)).